The sequence spans 474 residues: Glutathione synthetase (474 aa).

An N-acetylalanine modification is found at A2. Residue R125 participates in substrate binding. Residue E144 participates in ATP binding. E144 and N146 together coordinate Mg(2+). Residues 148-151 (ISAS), 214-216 (ERN), Q220, and 267-270 (RDGY) contribute to the substrate site. ATP is bound by residues K305, 364-373 (KPQREGGGNN), Y375, and 398-401 (MEKI). E368 is a binding site for Mg(2+). S415 is modified (phosphoserine). An ATP-binding site is contributed by E425. A substrate-binding site is contributed by R450. The ATP site is built by K452 and D458. 461-462 (VA) serves as a coordination point for substrate.

Belongs to the eukaryotic GSH synthase family. As to quaternary structure, homodimer. Mg(2+) is required as a cofactor.

The enzyme catalyses gamma-L-glutamyl-L-cysteine + glycine + ATP = glutathione + ADP + phosphate + H(+). It carries out the reaction gamma-L-glutamyl-(2S)-2-aminobutanoate + glycine + ATP = ophthalmate + ADP + phosphate + H(+). It functions in the pathway sulfur metabolism; glutathione biosynthesis; glutathione from L-cysteine and L-glutamate: step 2/2. Functionally, catalyzes the production of glutathione from gamma-glutamylcysteine and glycine in an ATP-dependent manner. Glutathione (gamma-glutamylcysteinylglycine, GSH) is the most abundant intracellular thiol in living aerobic cells and is required for numerous processes including the protection of cells against oxidative damage, amino acid transport, the detoxification of foreign compounds, the maintenance of protein sulfhydryl groups in a reduced state and acts as a cofactor for a number of enzymes. Participates in ophthalmate biosynthesis in hepatocytes. The protein is Glutathione synthetase of Rattus norvegicus (Rat).